A 311-amino-acid polypeptide reads, in one-letter code: tRNA-cytidine(32) 2-sulfurtransferase (311 aa).

Positions 47 to 52 (SGGKDS) match the PP-loop motif motif. The [4Fe-4S] cluster site is built by cysteine 122, cysteine 125, and cysteine 213.

This sequence belongs to the TtcA family. In terms of assembly, homodimer. Mg(2+) serves as cofactor. [4Fe-4S] cluster is required as a cofactor.

It is found in the cytoplasm. It catalyses the reaction cytidine(32) in tRNA + S-sulfanyl-L-cysteinyl-[cysteine desulfurase] + AH2 + ATP = 2-thiocytidine(32) in tRNA + L-cysteinyl-[cysteine desulfurase] + A + AMP + diphosphate + H(+). It participates in tRNA modification. Its function is as follows. Catalyzes the ATP-dependent 2-thiolation of cytidine in position 32 of tRNA, to form 2-thiocytidine (s(2)C32). The sulfur atoms are provided by the cysteine/cysteine desulfurase (IscS) system. In Salmonella choleraesuis (strain SC-B67), this protein is tRNA-cytidine(32) 2-sulfurtransferase.